Consider the following 89-residue polypeptide: Small ribosomal subunit protein uS15 (89 aa).

This sequence belongs to the universal ribosomal protein uS15 family. Part of the 30S ribosomal subunit. Forms a bridge to the 50S subunit in the 70S ribosome, contacting the 23S rRNA.

In terms of biological role, one of the primary rRNA binding proteins, it binds directly to 16S rRNA where it helps nucleate assembly of the platform of the 30S subunit by binding and bridging several RNA helices of the 16S rRNA. Its function is as follows. Forms an intersubunit bridge (bridge B4) with the 23S rRNA of the 50S subunit in the ribosome. The sequence is that of Small ribosomal subunit protein uS15 from Bartonella bacilliformis (strain ATCC 35685 / KC583 / Herrer 020/F12,63).